A 144-amino-acid chain; its full sequence is Cytochrome c-type biogenesis protein CcmE (144 aa).

Residues 1–7 (MKPRHKR) are Cytoplasmic-facing. Residues 8 to 28 (ALIIIAALIAIGVAALLILNA) traverse the membrane as a helical; Signal-anchor for type II membrane protein segment. The Periplasmic segment spans residues 29 to 144 (LNSNIALYVT…DQAQKNGSAK (116 aa)). Residues His121 and Tyr125 each contribute to the heme site.

Belongs to the CcmE/CycJ family.

It is found in the cell inner membrane. In terms of biological role, heme chaperone required for the biogenesis of c-type cytochromes. Transiently binds heme delivered by CcmC and transfers the heme to apo-cytochromes in a process facilitated by CcmF and CcmH. This Polynucleobacter necessarius subsp. necessarius (strain STIR1) protein is Cytochrome c-type biogenesis protein CcmE.